Reading from the N-terminus, the 166-residue chain is MRCPFCGHDDTQVKDSRSTEDGVAIRRRRVCSACTQRFTTVERVQLRELSVTKADGRRVPFDRDKLARSIRVALRKRPVPEERQERLVNGLVRQLEASGEHEISSHRIGQLAMDALREVDGVAYVRFTSVYRDFREVEAFSKILADMKPIPGETDTPSPDDSQETP.

Residues C3–C34 fold into a zinc finger. The ATP-cone domain maps to L49–A139. The interval D146–P166 is disordered.

Belongs to the NrdR family. It depends on Zn(2+) as a cofactor.

Negatively regulates transcription of bacterial ribonucleotide reductase nrd genes and operons by binding to NrdR-boxes. The sequence is that of Transcriptional repressor NrdR from Gluconobacter oxydans (strain 621H) (Gluconobacter suboxydans).